The primary structure comprises 355 residues: Guanine nucleotide-binding protein subunit alpha-14 (355 aa).

Positions 34–355 (RELKLLLLGT…QLNLREFNLV (322 aa)) constitute a G-alpha domain. The segment at 37–50 (KLLLLGTGESGKST) is G1 motif. Residues 42-49 (GTGESGKS), 176-182 (LRVRVPT), 201-205 (DVGGQ), 270-273 (NKKD), and Ala-327 each bind GTP. Positions 49 and 182 each coordinate Mg(2+). The segment at 174–182 (DVLRVRVPT) is G2 motif. Residues 197–206 (FRMVDVGGQR) are G3 motif. The G4 motif stretch occupies residues 266-273 (ILFLNKKD). Positions 325-330 (TCATDT) are G5 motif.

The protein belongs to the G-alpha family. G(q) subfamily. In terms of assembly, g proteins are composed of 3 units; alpha, beta and gamma. The alpha chain contains the guanine nucleotide binding site.

Guanine nucleotide-binding proteins (G proteins) are involved as modulators or transducers in various transmembrane signaling systems. The chain is Guanine nucleotide-binding protein subunit alpha-14 (GNA14) from Bos taurus (Bovine).